Reading from the N-terminus, the 427-residue chain is UPF0229 protein YeaH (427 aa).

The segment covering 79–90 (NDHFVQNDRIER) has biased composition (basic and acidic residues). The segment at 79-110 (NDHFVQNDRIERPQGGGGGSGSGQGQASQDGE) is disordered. The segment covering 92–102 (QGGGGGSGSGQ) has biased composition (gly residues).

Belongs to the UPF0229 family.

In Escherichia coli O127:H6 (strain E2348/69 / EPEC), this protein is UPF0229 protein YeaH.